The primary structure comprises 704 residues: Elongation factor G (704 aa).

In terms of domain architecture, tr-type G spans 8 to 290 (ARYRNIGISA…AVIDYLPSPV (283 aa)). GTP-binding positions include 17-24 (AHIDAGKT), 88-92 (DTPGH), and 142-145 (NKMD).

This sequence belongs to the TRAFAC class translation factor GTPase superfamily. Classic translation factor GTPase family. EF-G/EF-2 subfamily.

It is found in the cytoplasm. In terms of biological role, catalyzes the GTP-dependent ribosomal translocation step during translation elongation. During this step, the ribosome changes from the pre-translocational (PRE) to the post-translocational (POST) state as the newly formed A-site-bound peptidyl-tRNA and P-site-bound deacylated tRNA move to the P and E sites, respectively. Catalyzes the coordinated movement of the two tRNA molecules, the mRNA and conformational changes in the ribosome. This chain is Elongation factor G, found in Salmonella agona (strain SL483).